A 112-amino-acid polypeptide reads, in one-letter code: UPF0060 membrane protein Mpe_A1656 (112 aa).

A run of 4 helical transmembrane segments spans residues 9-29 (GLFF…WLVL), 34-54 (SAWL…LLTL), 65-85 (AYGG…DGVV), and 91-111 (LVGG…PRAA).

The protein belongs to the UPF0060 family.

The protein resides in the cell inner membrane. The protein is UPF0060 membrane protein Mpe_A1656 of Methylibium petroleiphilum (strain ATCC BAA-1232 / LMG 22953 / PM1).